A 148-amino-acid chain; its full sequence is Protein NrdI (148 aa).

The protein belongs to the NrdI family.

Its function is as follows. Probably involved in ribonucleotide reductase function. This chain is Protein NrdI, found in Corynebacterium glutamicum (strain R).